Reading from the N-terminus, the 119-residue chain is Large ribosomal subunit protein bL19c (119 aa).

It belongs to the bacterial ribosomal protein bL19 family.

It localises to the plastid. It is found in the chloroplast. In Mesostigma viride (Green alga), this protein is Large ribosomal subunit protein bL19c.